We begin with the raw amino-acid sequence, 463 residues long: Fumarate hydratase class II (463 aa).

Residues S98–T100, H129–D132, S139–N141, and T187 each bind substrate. Residues K121 to N141 form a disordered region. The active-site Proton donor/acceptor is the H188. S318 is a catalytic residue. Substrate contacts are provided by residues S319 and K324–N326.

The protein belongs to the class-II fumarase/aspartase family. Fumarase subfamily. Homotetramer.

It localises to the cytoplasm. The enzyme catalyses (S)-malate = fumarate + H2O. It functions in the pathway carbohydrate metabolism; tricarboxylic acid cycle; (S)-malate from fumarate: step 1/1. Functionally, involved in the TCA cycle. Catalyzes the stereospecific interconversion of fumarate to L-malate. In Rickettsia conorii (strain ATCC VR-613 / Malish 7), this protein is Fumarate hydratase class II.